The sequence spans 570 residues: Set1/Ash2 histone methyltransferase complex subunit ash-2 (570 aa).

The PHD-type zinc-finger motif lies at 19-76; sequence TTVCYCDGKRELGSVEVVCSTCLKWFHGRCLKEFHELNSNGVPFMICYTFTCKQCRPT. Residues 201–242 form a disordered region; that stretch reads NREPRHIELPPIEGPKTRGASKRRHAEAPVTGKKQKLAADYS. In terms of domain architecture, B30.2/SPRY spans 270-468; the sequence is PNVPEDPAWN…TLVEMPGSYI (199 aa).

Component of the SET2 complex (also known as the SET1/COMPASS complex), which contains at least set-2, swd-2.1, cfp-1, rbbp-5, wdr-5.1, dpy-30 and ash-2. Within the complex, interacts with cfp-1 and wdr-5.1. Expressed in somatic and germline tissues (at protein level).

Its subcellular location is the nucleus. Its function is as follows. Component of the set-2/ash-2 histone methyltransferase (HMT) complex. Required for the di- and trimethylation at 'Lys-4' of histone H3, a mark associated with epigenetic transcriptional activation. Implicated in the epigenetic inheritance of lifespan over several generations. Functions as a transcriptional regulator. Acts in the germline to limit the longevity of the soma, probably by regulating a lipid metabolism pathway that signals from the germline to the intestine, thereby preventing accumulation of mono-unsaturated fatty acids. This chain is Set1/Ash2 histone methyltransferase complex subunit ash-2, found in Caenorhabditis elegans.